Reading from the N-terminus, the 295-residue chain is Protein PHR1-LIKE 2 (295 aa).

Residues threonine 38–glutamine 98 enclose the HTH myb-type domain. Positions proline 69 to arginine 94 form a DNA-binding region, H-T-H motif. The disordered stretch occupies residues glycine 96–tyrosine 138. Positions alanine 99–lysine 108 are enriched in basic and acidic residues. Positions methionine 127–tyrosine 138 are enriched in polar residues. The stretch at threonine 141 to glutamine 161 forms a coiled coil. Positions leucine 154 to glutamate 159 match the LHEQLE motif.

The protein belongs to the MYB-CC family. Homo- and heterodimers. Interacts with PHL3, but not with PHR1.

It localises to the nucleus. In terms of biological role, transcriptional activator. Acts redundantly with PHR1 as a key component of the central regulatory system controlling transcriptional responses to Pi starvation. Binds in a sequence-specific manner to phosphate starvation-regulated promoters. The sequence is that of Protein PHR1-LIKE 2 from Arabidopsis thaliana (Mouse-ear cress).